The primary structure comprises 193 residues: Holliday junction branch migration complex subunit RuvA (193 aa).

Positions Met-1–Leu-64 are domain I. Positions Thr-65–Leu-139 are domain II. Positions Leu-139–Ala-143 are flexible linker. Residues Ser-144–Val-193 form a domain III region.

It belongs to the RuvA family. As to quaternary structure, homotetramer. Forms an RuvA(8)-RuvB(12)-Holliday junction (HJ) complex. HJ DNA is sandwiched between 2 RuvA tetramers; dsDNA enters through RuvA and exits via RuvB. An RuvB hexamer assembles on each DNA strand where it exits the tetramer. Each RuvB hexamer is contacted by two RuvA subunits (via domain III) on 2 adjacent RuvB subunits; this complex drives branch migration. In the full resolvosome a probable DNA-RuvA(4)-RuvB(12)-RuvC(2) complex forms which resolves the HJ.

The protein localises to the cytoplasm. In terms of biological role, the RuvA-RuvB-RuvC complex processes Holliday junction (HJ) DNA during genetic recombination and DNA repair, while the RuvA-RuvB complex plays an important role in the rescue of blocked DNA replication forks via replication fork reversal (RFR). RuvA specifically binds to HJ cruciform DNA, conferring on it an open structure. The RuvB hexamer acts as an ATP-dependent pump, pulling dsDNA into and through the RuvAB complex. HJ branch migration allows RuvC to scan DNA until it finds its consensus sequence, where it cleaves and resolves the cruciform DNA. The sequence is that of Holliday junction branch migration complex subunit RuvA from Burkholderia lata (strain ATCC 17760 / DSM 23089 / LMG 22485 / NCIMB 9086 / R18194 / 383).